Here is a 351-residue protein sequence, read N- to C-terminus: DNA beta-glucosyltransferase (351 aa).

As to quaternary structure, monomer.

The catalysed reaction is Transfers a beta-D-glucosyl residue from UDP-alpha-D-glucose to a hydroxymethylcytosine residue in DNA.. It participates in genetic information processing; DNA modification. In terms of biological role, catalyzes the transfer of glucose from uridine diphosphoglucose to 5-hydroxymethyl cytosine of T4 DNA to yield glucosyl 5-hydroxymethyl cytosine (glc-HMC). This DNA process seems to occur immediately after DNA synthesis since the DNA alpha-glucosyltransferase interacts with the clamp protein gp45. The glc-HMC modification protects the phage genome against its own nucleases and the host restriction endonuclease system. The glc-HMC modification also protects against the host CRISPR-Cas9 defense system. In Enterobacteria phage T4 (Bacteriophage T4), this protein is DNA beta-glucosyltransferase (bgt).